A 681-amino-acid polypeptide reads, in one-letter code: Pentatricopeptide repeat-containing protein At2g22410, mitochondrial (681 aa).

Residues methionine 1–arginine 32 constitute a mitochondrion transit peptide. PPR repeat units follow at residues asparagine 117–glutamate 151, aspartate 155–leucine 189, valine 190–arginine 220, aspartate 221–proline 255, aspartate 256–methionine 290, threonine 291–arginine 321, threonine 322–leucine 356, tryptophan 357–proline 387, aspartate 388–leucine 422, asparagine 423–arginine 453, asparagine 454–proline 488, aspartate 489–arginine 519, and glutamine 525–glutamate 555. The interval valine 560 to asparagine 635 is type E motif. The segment at glycine 636 to arginine 666 is type E(+) motif.

It belongs to the PPR family. PCMP-E subfamily.

It localises to the mitochondrion. The polypeptide is Pentatricopeptide repeat-containing protein At2g22410, mitochondrial (PCMP-E28) (Arabidopsis thaliana (Mouse-ear cress)).